The chain runs to 210 residues: Outer-membrane lipoprotein carrier protein (210 aa).

An N-terminal signal peptide occupies residues 1–23 (MLMFSRFRYIFFAVALLSGPVCA).

This sequence belongs to the LolA family. As to quaternary structure, monomer.

It localises to the periplasm. In terms of biological role, participates in the translocation of lipoproteins from the inner membrane to the outer membrane. Only forms a complex with a lipoprotein if the residue after the N-terminal Cys is not an aspartate (The Asp acts as a targeting signal to indicate that the lipoprotein should stay in the inner membrane). This chain is Outer-membrane lipoprotein carrier protein, found in Xylella fastidiosa (strain Temecula1 / ATCC 700964).